We begin with the raw amino-acid sequence, 360 residues long: Protein Wnt-2 (360 aa).

A signal peptide spans 1–25 (MNAPLGGIWLWLPLLLTWLTPEVSS). Cystine bridges form between Cys76–Cys87, Cys127–Cys135, Cys137–Cys157, Cys206–Cys220, Cys208–Cys215, Cys278–Cys309, Cys294–Cys304, Cys308–Cys348, Cys324–Cys339, Cys326–Cys336, and Cys331–Cys332. Ser212 carries the O-palmitoleoyl serine; by PORCN lipid modification. An N-linked (GlcNAc...) asparagine glycan is attached at Asn295.

It belongs to the Wnt family. Palmitoleoylation is required for efficient binding to frizzled receptors. Depalmitoleoylation leads to Wnt signaling pathway inhibition.

The protein localises to the secreted. Its subcellular location is the extracellular space. It localises to the extracellular matrix. Its function is as follows. Ligand for members of the frizzled family of seven transmembrane receptors. Functions in the canonical Wnt signaling pathway that results in activation of transcription factors of the TCF/LEF family. Functions as a upstream regulator of FGF10 expression. Plays an important role in embryonic lung development. May contribute to embryonic brain development by regulating the proliferation of dopaminergic precursors and neurons. This Equus caballus (Horse) protein is Protein Wnt-2 (WNT2).